The chain runs to 280 residues: Large ribosomal subunit protein uL2 (280 aa).

2 disordered regions span residues 1–59 and 223–280; these read MAIR…GGHK and GVVM…NKKR. Positions 23–33 are enriched in basic and acidic residues; sequence ELTRSTPEKSL. Basic residues-rich tracts occupy residues 36-59 and 269-280; these read PLHKTGGRNVHGHITTRHKGGGHK and VRRRRSNKNKKR.

The protein belongs to the universal ribosomal protein uL2 family. As to quaternary structure, part of the 50S ribosomal subunit. Forms a bridge to the 30S subunit in the 70S ribosome.

Its function is as follows. One of the primary rRNA binding proteins. Required for association of the 30S and 50S subunits to form the 70S ribosome, for tRNA binding and peptide bond formation. It has been suggested to have peptidyltransferase activity; this is somewhat controversial. Makes several contacts with the 16S rRNA in the 70S ribosome. This chain is Large ribosomal subunit protein uL2, found in Corynebacterium kroppenstedtii (strain DSM 44385 / JCM 11950 / CIP 105744 / CCUG 35717).